Consider the following 136-residue polypeptide: Large ribosomal subunit protein uL16 (136 aa).

The protein belongs to the universal ribosomal protein uL16 family. In terms of assembly, part of the 50S ribosomal subunit.

Its function is as follows. Binds 23S rRNA and is also seen to make contacts with the A and possibly P site tRNAs. The chain is Large ribosomal subunit protein uL16 from Sodalis glossinidius (strain morsitans).